A 424-amino-acid chain; its full sequence is MAKNIQAIRGMNDYLPGETAIWQRIEGTLKNVLGSYGYSEIRLPIVEQTPLFKRAIGEVTDVVEKEMYTFEDRNGDSLTLRPEGTAGCVRAGIEHGLLYNQEQRLWYIGPMFRHERPQKGRYRQFHQLGAEVFGLQGPDIDAELIMLTARWWRALGIAEHVSLELNSIGSLEARANYRDALVAFLEQHQETLDEDCKRRMYTNPLRVLDSKNPDVQALLNDAPVLGDYLDDDSREHFAGLCKLLDAAGIAYTVNQRLVRGLDYYNRTVFEWVTNSLGSQGTVCAGGRYDGLVEQLGGRATPAVGFAMGLERLVLLVQAVNPEFIASPVVDIYLVAAGAQTQSAAMTLAERLRDEMPGVKLMTNHGGGNFKKQFARADKWGARIALVLGESEVADGTVVVKDLRSGEQTAVAQDSVAAHLRTLLG.

This sequence belongs to the class-II aminoacyl-tRNA synthetase family. As to quaternary structure, homodimer.

The protein localises to the cytoplasm. It carries out the reaction tRNA(His) + L-histidine + ATP = L-histidyl-tRNA(His) + AMP + diphosphate + H(+). The chain is Histidine--tRNA ligase from Salmonella heidelberg (strain SL476).